The following is a 117-amino-acid chain: Prefoldin subunit beta (117 aa).

The protein belongs to the prefoldin subunit beta family. In terms of assembly, heterohexamer of two alpha and four beta subunits.

Its subcellular location is the cytoplasm. Functionally, molecular chaperone capable of stabilizing a range of proteins. Seems to fulfill an ATP-independent, HSP70-like function in archaeal de novo protein folding. This Methanosarcina barkeri (strain Fusaro / DSM 804) protein is Prefoldin subunit beta.